The primary structure comprises 282 residues: Type 1 encapsulin shell protein (282 aa).

This sequence belongs to the encapsulin family. Family 1 subfamily. Initially thought to form a 180 subunit shell. Forms hollow shells composed of 240 subunits, making a shell about 42-43 nm in diameter. The monomer is capable of assuming 4 different conformations which allows packaging into the icosahedron. The shell has 12 pentameric and 30 hexameric capsomers which form the vertices and faces of the icosahedral nanocompartment.

The protein resides in the encapsulin nanocompartment. Shell component of a type 1 encapsulin nanocompartment. Assembles into proteinaceous icosahedral shells 42-43 nm in diameter with an iron- and phosphorus-rich core (1Fe:1.1P) which can store over 23,000-35,000 iron atoms (with a calculated maximum of 83,000 Fe). There are 2 types of negatively charged open pores in the cryo-electron structure; a 3-fold pore where 3 hexamers meet with a minimal size of 7.2 Angstroms and a 5-fold pore where pentamers meet with a minimal size of 2.3 Angstroms. The 2-fold pore seen in other encapsulin nanocompartments is closed. Empty compartments can be generated in E.coli. Both types of pore have extra density in their centers in the structure. 2 different cargo proteins have been identified (IMEF and Fer); when both are expressed in E.coli with the shell protein only IMEF is detected within the nanocompartment. E.coli expressing all 3 genes stores the largest amount of iron and is protected from Fe/H2O2-induced oxidative stress. Part of the iron-mineralizing encapsulin-associated Firmicute (IMEF) system. The sequence is that of Type 1 encapsulin shell protein from Bacillus thermotolerans (Quasibacillus thermotolerans).